The primary structure comprises 728 residues: Lanosterol synthase (728 aa).

Residues Arg117 to Gly159 form a PFTB 1 repeat. The Proton donor role is filled by Asp450. 2 PFTB repeats span residues Ile561–Gly602 and Val611–Gly657.

This sequence belongs to the terpene cyclase/mutase family.

It is found in the lipid droplet. The protein resides in the endoplasmic reticulum membrane. The catalysed reaction is (S)-2,3-epoxysqualene = lanosterol. The protein operates within terpene metabolism; lanosterol biosynthesis; lanosterol from farnesyl diphosphate: step 3/3. Functionally, lanosterol synthase; part of the third module of ergosterol biosynthesis pathway that includes the late steps of the pathway. ERG7 catalyzes the cyclization of (S)-2,3 oxidosqualene to lanosterol, a reaction that forms the sterol core. The third module or late pathway involves the ergosterol synthesis itself through consecutive reactions that mainly occur in the endoplasmic reticulum (ER) membrane. Firstly, the squalene synthase ERG9 catalyzes the condensation of 2 farnesyl pyrophosphate moieties to form squalene, which is the precursor of all steroids. Squalene synthase is crucial for balancing the incorporation of farnesyl diphosphate (FPP) into sterol and nonsterol isoprene synthesis. Secondly, the squalene epoxidase ERG1 catalyzes the stereospecific oxidation of squalene to (S)-2,3-epoxysqualene, which is considered to be a rate-limiting enzyme in steroid biosynthesis. Then, the lanosterol synthase ERG7 catalyzes the cyclization of (S)-2,3 oxidosqualene to lanosterol, a reaction that forms the sterol core. In the next steps, lanosterol is transformed to zymosterol through a complex process involving various demethylation, reduction and desaturation reactions. The lanosterol 14-alpha-demethylase ERG11 (also known as CYP51) catalyzes C14-demethylation of lanosterol to produce 4,4'-dimethyl cholesta-8,14,24-triene-3-beta-ol, which is critical for ergosterol biosynthesis. The C-14 reductase ERG24 reduces the C14=C15 double bond of 4,4-dimethyl-cholesta-8,14,24-trienol to produce 4,4-dimethyl-cholesta-8,24-dienol. 4,4-dimethyl-cholesta-8,24-dienol is substrate of the C-4 demethylation complex ERG25-ERG26-ERG27 in which ERG25 catalyzes the three-step monooxygenation required for the demethylation of 4,4-dimethyl and 4alpha-methylsterols, ERG26 catalyzes the oxidative decarboxylation that results in a reduction of the 3-beta-hydroxy group at the C-3 carbon to an oxo group, and ERG27 is responsible for the reduction of the keto group on the C-3. ERG28 has a role as a scaffold to help anchor ERG25, ERG26 and ERG27 to the endoplasmic reticulum and ERG29 regulates the activity of the iron-containing C4-methylsterol oxidase ERG25. Then, the sterol 24-C-methyltransferase ERG6 catalyzes the methyl transfer from S-adenosyl-methionine to the C-24 of zymosterol to form fecosterol. The C-8 sterol isomerase ERG2 catalyzes the reaction which results in unsaturation at C-7 in the B ring of sterols and thus converts fecosterol to episterol. The sterol-C5-desaturase ERG3 then catalyzes the introduction of a C-5 double bond in the B ring to produce 5-dehydroepisterol. The C-22 sterol desaturase ERG5 further converts 5-dehydroepisterol into ergosta-5,7,22,24(28)-tetraen-3beta-ol by forming the C-22(23) double bond in the sterol side chain. Finally, ergosta-5,7,22,24(28)-tetraen-3beta-ol is substrate of the C-24(28) sterol reductase ERG4 to produce ergosterol. The protein is Lanosterol synthase of Candida albicans (strain SC5314 / ATCC MYA-2876) (Yeast).